The primary structure comprises 216 residues: Guanylate kinase (216 aa).

The 179-residue stretch at 15–193 folds into the Guanylate kinase-like domain; that stretch reads GNLFMVVAPS…ALKQLQNVVH (179 aa). Residue 22-29 coordinates ATP; that stretch reads APSGAGKS.

Belongs to the guanylate kinase family.

The protein resides in the cytoplasm. The enzyme catalyses GMP + ATP = GDP + ADP. Functionally, essential for recycling GMP and indirectly, cGMP. The protein is Guanylate kinase of Cupriavidus metallidurans (strain ATCC 43123 / DSM 2839 / NBRC 102507 / CH34) (Ralstonia metallidurans).